The following is a 169-amino-acid chain: Putative adenylate kinase (169 aa).

ATP is bound by residues Gly-10, Gly-12, Lys-13, Thr-14, and Thr-15. The tract at residues His-28–Val-51 is NMP. An LID region spans residues Asp-98–Glu-108. Arg-99 provides a ligand contact to ATP.

This sequence belongs to the adenylate kinase family. AK6 subfamily. Interacts with uS11. Not a structural component of 40S pre-ribosomes, but transiently interacts with them by binding to uS11.

The catalysed reaction is AMP + ATP = 2 ADP. It catalyses the reaction ATP + H2O = ADP + phosphate + H(+). Its function is as follows. Broad-specificity nucleoside monophosphate (NMP) kinase that catalyzes the reversible transfer of the terminal phosphate group between nucleoside triphosphates and monophosphates. Also has ATPase activity. Involved in the late maturation steps of the 30S ribosomal particles, specifically 16S rRNA maturation. While NMP activity is not required for ribosome maturation, ATPase activity is. Associates transiently with small ribosomal subunit protein uS11. ATP hydrolysis breaks the interaction with uS11. May temporarily remove uS11 from the ribosome to enable a conformational change of the ribosomal RNA that is needed for the final maturation step of the small ribosomal subunit. The chain is Putative adenylate kinase from Halobacterium salinarum (strain ATCC 29341 / DSM 671 / R1).